The chain runs to 1021 residues: Phytosulfokine receptor 1 (1021 aa).

Positions 1 to 24 (MGVLRVYVILILVGFCVQIVVVNS) are cleaved as a signal peptide. Residues 21–43 (VVNSQNLTCNSNDLKALEGFMRG) form an LRR 1 repeat. 3 N-linked (GlcNAc...) asparagine glycosylation sites follow: N26, N54, and N83. LRR repeat units follow at residues 85 to 109 (SGRV…VAKL), 110 to 133 (DQLK…LLNL), 135 to 156 (NLEV…LINL), 158 to 180 (SLRV…LCNN), 181 to 205 (LPRI…IGNC), 206 to 229 (SSVE…LFQL), 231 to 252 (NLSV…KLGK), 253 to 277 (LSNL…FLEL), 301 to 325 (SRSI…CSAM), 326 to 349 (TNLT…LPNC), 351 to 372 (RLKT…SFKN), 373 to 397 (FQSL…EILQ), 402 to 426 (LKTL…QFKN), 428 to 448 (KVLI…LSNS), 449 to 474 (PSLQ…SLNS), and 476 to 496 (FYLD…LTSL). N-linked (GlcNAc...) asparagine glycosylation is found at N116 and N132. N204, N217, and N231 each carry an N-linked (GlcNAc...) asparagine glycan. N-linked (GlcNAc...) asparagine glycosylation is found at N311, N321, and N327. 2 N-linked (GlcNAc...) asparagine glycosylation sites follow: N383 and N388. N-linked (GlcNAc...) asparagine glycosylation is found at N482, N546, N568, N576, and N592. The LRR 18; atypical repeat unit spans residues 498 to 555 (SLVSKENAVEEPSPDFPFFKKKNTNAGGLQYNQPSSFPPMIDLSYNSLNGSIWPEFGD). LRR repeat units lie at residues 556–580 (LRQL…LSGM), 581–604 (TSLE…LVKL), and 606–629 (FLST…QFQT). An N-linked (GlcNAc...) asparagine glycan is attached at N632. The chain crosses the membrane as a helical span at residues 673–693 (VAVGTGLGTVFLLTVTLLIIL). The 272-residue stretch at 743–1014 (FNQANIIGCG…PTTQQLVSWL (272 aa)) folds into the Protein kinase domain. ATP is bound by residues 749–757 (IGCGGFGLV) and K771. The Proton acceptor role is filled by D869.

This sequence belongs to the protein kinase superfamily. Ser/Thr protein kinase family. N-glycosylated. Expressed ubiquitously in leaf, apical meristem, hypocotyl and root.

Its subcellular location is the cell membrane. It catalyses the reaction L-seryl-[protein] + ATP = O-phospho-L-seryl-[protein] + ADP + H(+). The enzyme catalyses L-threonyl-[protein] + ATP = O-phospho-L-threonyl-[protein] + ADP + H(+). Its function is as follows. Phytosulfokine receptor with a serine/threonine-protein kinase activity. Regulates, in response to phytosulfokine binding, a signaling cascade involved in plant cell differentiation, organogenesis and somatic embryogenesis. The sequence is that of Phytosulfokine receptor 1 (PSKR) from Daucus carota (Wild carrot).